A 233-amino-acid polypeptide reads, in one-letter code: Phosphoenolpyruvate guanylyltransferase 1 (233 aa).

3 residues coordinate phosphoenolpyruvate: threonine 154, glycine 171, and serine 174.

It belongs to the CofC family.

The enzyme catalyses phosphoenolpyruvate + GTP + H(+) = enolpyruvoyl-2-diphospho-5'-guanosine + diphosphate. It functions in the pathway cofactor biosynthesis; coenzyme F420 biosynthesis. Its function is as follows. Guanylyltransferase that catalyzes the activation of phosphoenolpyruvate (PEP) as enolpyruvoyl-2-diphospho-5'-guanosine, via the condensation of PEP with GTP. It is involved in the biosynthesis of coenzyme F420, a hydride carrier cofactor. The chain is Phosphoenolpyruvate guanylyltransferase 1 from Rhodococcus jostii (strain RHA1).